The primary structure comprises 785 residues: Proprotein convertase subtilisin/kexin type 7 (785 aa).

Positions 1–37 are cleaved as a signal peptide; the sequence is MPKGRQKVPHLDAPLGLPTCLWLELAGLFLLVPWVMG. A propeptide spanning residues 38 to 141 is cleaved from the precursor; it reads LAGTGGPDGQ…EQRLLRRAKR (104 aa). Topologically, residues 142 to 667 are extracellular; the sequence is SVHFNDPKYP…YTITPNTLKT (526 aa). The 321-residue stretch at 153–473 folds into the Peptidase S8 domain; it reads QWHLNNRRSP…FGLLNAWRLV (321 aa). 2 N-linked (GlcNAc...) asparagine glycosylation sites follow: asparagine 167 and asparagine 175. Aspartate 187 acts as the Charge relay system in catalysis. Residues 197 to 219 form a disordered region; that stretch reads IAPNYSPEGSYDLNSNDPDPMPH. Histidine 228 (charge relay system) is an active-site residue. N-linked (GlcNAc...) asparagine glycosylation is present at asparagine 241. The active-site Charge relay system is serine 406. Residues 481–618 form the P/Homo B domain; the sequence is SVPYLASYVS…QLTLYGSVWS (138 aa). Asparagine 511 is a glycosylation site (N-linked (GlcNAc...) asparagine). Residues 668 to 688 traverse the membrane as a helical segment; sequence LVLVGCFTVFWTVYYMLEVYL. Residues 689 to 785 lie on the Cytoplasmic side of the membrane; it reads SQRNVASNQV…VPHGKEEQIC (97 aa). The interval 700–751 is disordered; that stretch reads RSGPCHWPHRSRKAKEEGTELESVPLCSSKDPDEVETESRGPPTTSDLLAPD.

The protein belongs to the peptidase S8 family. Ca(2+) serves as cofactor. In terms of processing, cysteine residues in the cytoplasmic tail are probably palmitoylated. Post-translationally, N-glycosylated. As to expression, expressed in spleen, thymus, prostate, testis, ovary, small intestine, colon and peripheral blood leukocyte.

The protein localises to the golgi apparatus. The protein resides in the trans-Golgi network membrane. Inhibited by zinc and copper. In terms of biological role, serine endoprotease that processes various proproteins by cleavage at paired basic amino acids, recognizing the RXXX[KR]R consensus motif. Likely functions in the constitutive secretory pathway. In Homo sapiens (Human), this protein is Proprotein convertase subtilisin/kexin type 7 (PCSK7).